A 596-amino-acid polypeptide reads, in one-letter code: Arginine--tRNA ligase (596 aa).

A 'HIGH' region motif is present at residues 127-137 (ANPTGPVHVGR).

This sequence belongs to the class-I aminoacyl-tRNA synthetase family.

It is found in the cytoplasm. The catalysed reaction is tRNA(Arg) + L-arginine + ATP = L-arginyl-tRNA(Arg) + AMP + diphosphate. This chain is Arginine--tRNA ligase, found in Haloquadratum walsbyi (strain DSM 16790 / HBSQ001).